Here is a 180-residue protein sequence, read N- to C-terminus: Pro-glucagon (180 aa).

A signal peptide spans 1–20 (MKTVYIVAGLFVMLVQGSWQ). A disordered region spans residues 23–59 (PQDTEENARSFPASQTEPLEDPDQINEDKRHSQGTFT). Serine 54 carries the phosphoserine modification. A propeptide spanning residues 84-89 (NRNNIA) is cleaved from the precursor. Serine 105 and serine 108 each carry phosphoserine. Position 127 is an arginine amide (arginine 127). Positions 131 to 145 (DFPEEVAIAEELGRR) are excised as a propeptide. Serine 150 and serine 152 each carry phosphoserine.

Belongs to the glucagon family. In terms of processing, proglucagon is post-translationally processed in a tissue-specific manner in pancreatic A cells and intestinal L cells. In pancreatic A cells, the major bioactive hormone is glucagon cleaved by PCSK2/PC2. In the intestinal L cells PCSK1/PC1 liberates GLP-1, GLP-2, glicentin and oxyntomodulin. GLP-1 is further N-terminally truncated by post-translational processing in the intestinal L cells resulting in GLP-1(7-37) GLP-1-(7-36)amide. The C-terminal amidation is neither important for the metabolism of GLP-1 nor for its effects on the endocrine pancreas. In terms of tissue distribution, glucagon is secreted in the A cells of the islets of Langerhans. GLP-1, GLP-2, oxyntomodulin and glicentin are secreted from enteroendocrine cells throughout the gastrointestinal tract.

It is found in the secreted. Its function is as follows. Plays a key role in glucose metabolism and homeostasis. Regulates blood glucose by increasing gluconeogenesis and decreasing glycolysis. A counterregulatory hormone of insulin, raises plasma glucose levels in response to insulin-induced hypoglycemia. Plays an important role in initiating and maintaining hyperglycemic conditions in diabetes. Functionally, potent stimulator of glucose-dependent insulin release. Also stimulates insulin release in response to IL6. Plays important roles on gastric motility and the suppression of plasma glucagon levels. May be involved in the suppression of satiety and stimulation of glucose disposal in peripheral tissues, independent of the actions of insulin. Has growth-promoting activities on intestinal epithelium. May also regulate the hypothalamic pituitary axis (HPA) via effects on LH, TSH, CRH, oxytocin, and vasopressin secretion. Increases islet mass through stimulation of islet neogenesis and pancreatic beta cell proliferation. Inhibits beta cell apoptosis. Stimulates intestinal growth and up-regulates villus height in the small intestine, concomitant with increased crypt cell proliferation and decreased enterocyte apoptosis. The gastrointestinal tract, from the stomach to the colon is the principal target for GLP-2 action. Plays a key role in nutrient homeostasis, enhancing nutrient assimilation through enhanced gastrointestinal function, as well as increasing nutrient disposal. Stimulates intestinal glucose transport and decreases mucosal permeability. In terms of biological role, may modulate gastric acid secretion and the gastro-pyloro-duodenal activity. May play an important role in intestinal mucosal growth in the early period of life. Its function is as follows. Oxyntomodulin significantly reduces food intake. The sequence is that of Pro-glucagon (Gcg) from Rattus norvegicus (Rat).